A 219-amino-acid polypeptide reads, in one-letter code: Swarming motility regulation protein RssB (219 aa).

In terms of domain architecture, Response regulatory spans 2–116 (NILLVEDDLQ…ELISRVKAVN (115 aa)). Position 51 is a 4-aspartylphosphate (D51). Positions 124-218 (SQTWSLGALY…VRGIGYLLKK (95 aa)) form a DNA-binding region, ompR/PhoB-type.

Its subcellular location is the cytoplasm. Its function is as follows. Member of the two-component regulatory system RssA/RssB involved in regulation of swarming motility which has been shown to be inhibited by saturated fatty acids. RssA/RssB regulates cellular fatty acid composition, hemolysin production and cell surface topography. RssA/RssB negatively regulates the activity of SlhBA. It can also act as a negative regulator for the control of the swarming initiation. RssB binds its own promoter. The chain is Swarming motility regulation protein RssB (rssB) from Serratia marcescens.